The sequence spans 306 residues: MKVNMEYTKEKKVGEGTYAVVYLGCQHSTGRKIAIKEIKTSEFKDGLDMSAIREVKYLQEMQHPNVIELIDIFMAYDNLNLVLEFLPTDLEVVIKDKSILFTPADIKAWMLMTLRGVYHCHRNFILHRDLKPNNLLFSPDGQIKVADFGLARAIPAPHEILTSNVVTRWYRAPELLFGAKHYTSAIDIWSVGVIFAELMLRIPYLPGQNDVDQMEVTFRALGTPTDRDWPEVSSFMTYNKLQIYPPPSRDELRKRFIAASEYALDFMCGMLTMNPQKRWTAVQCLESDYFKELPPPSDPSSIKIRN.

The region spanning Y7–F290 is the Protein kinase domain. ATP is bound by residues V13–V21 and K36. D129 serves as the catalytic Proton acceptor. T162 bears the Phosphothreonine; by CAK mark.

It belongs to the protein kinase superfamily. CMGC Ser/Thr protein kinase family. CDC2/CDKX subfamily. As to quaternary structure, CCL1 and KIN28 form the TFIIK complex, a component of the TFIIH holo complex. Component of a complex consisting of KIN28, CCL1 and TFB3. Interacts with TFB3. Also interacts with HNT1 and HOG1. In terms of processing, phosphorylation of Thr-162 regulates the affinity of interaction between CCL1, KIN28 and TFB3. Thr-162 phosphorylation does not vary through the cell cycle and is necessary for full kinase activity.

It is found in the nucleus. It carries out the reaction [DNA-directed RNA polymerase] + ATP = phospho-[DNA-directed RNA polymerase] + ADP + H(+). Its function is as follows. Catalytic component of the TFIIK complex (KIN28-CCL1 dimer) which is the protein kinase component of transcription factor IIH (TFIIH) and phosphorylates the C-terminal domain of RNA polymerase II during transition from transcription to elongation after preinitiation complex (PIC) formation, thereby positively regulating transcription. TFIIH (or factor B) is essential for both basal and activated transcription, and is involved in nucleotide excision repair (NER) of damaged DNA. TFIIH has DNA-dependent ATPase activity and is essential for polymerase II transcription in vitro. Essential for cell proliferation. The protein is Serine/threonine-protein kinase KIN28 (KIN28) of Saccharomyces cerevisiae (strain ATCC 204508 / S288c) (Baker's yeast).